A 396-amino-acid chain; its full sequence is uncharacterized protein (396 aa).

This sequence belongs to the NAD(P)-dependent epimerase/dehydratase family. The cofactor is NAD(+). It depends on NADP(+) as a cofactor.

Putative nucleotide sugar epimerase/dehydrogenase. This is an uncharacterized protein from Sinorhizobium fredii (strain NBRC 101917 / NGR234).